We begin with the raw amino-acid sequence, 443 residues long: 26S proteasome regulatory subunit rpn501 (443 aa).

Ser209 is modified (phosphoserine). The PCI domain occupies 230–402 (DVCKYYRAVY…QVISFKKSQN (173 aa)).

This sequence belongs to the proteasome subunit p55 family.

Its subcellular location is the nucleus. Its function is as follows. Acts as a regulatory subunit of the 26S proteasome which is involved in the ATP-dependent degradation of ubiquitinated proteins. Required for proper proteasome assembly. The protein is 26S proteasome regulatory subunit rpn501 (rpn501) of Schizosaccharomyces pombe (strain 972 / ATCC 24843) (Fission yeast).